The chain runs to 288 residues: Alpha/beta hydrolase domain-containing protein 17B (288 aa).

Residues Ser170, Asp235, and His264 each act as charge relay system in the active site. Ser282 bears the Phosphoserine mark.

Belongs to the AB hydrolase superfamily. ABHD17 family. In terms of processing, palmitoylated on cysteine residues located in a cysteine cluster at the N-terminus which promotes membrane localization. Palmitoylation is required for post-synaptic localization and for depalmitoylating activity towards DLG4/PSD95.

The protein resides in the cell membrane. It is found in the recycling endosome membrane. It localises to the cell projection. Its subcellular location is the dendritic spine. The protein localises to the postsynaptic density membrane. The enzyme catalyses S-hexadecanoyl-L-cysteinyl-[protein] + H2O = L-cysteinyl-[protein] + hexadecanoate + H(+). Its activity is regulated as follows. Inhibited by palmostatin-B. Its function is as follows. Hydrolyzes fatty acids from S-acylated cysteine residues in proteins. Has depalmitoylating activity towards DLG4/PSD95. Has depalmitoylating activity towards GAP43. Has depalmitoylating activity towards MAP6. Has depalmitoylating activity towards NRAS. The polypeptide is Alpha/beta hydrolase domain-containing protein 17B (Homo sapiens (Human)).